Here is a 367-residue protein sequence, read N- to C-terminus: Trans-enoyl reductase opdC (367 aa).

Residues 47 to 50, 199 to 202, tyrosine 217, 264 to 265, and 353 to 354 each bind NADP(+); these read YDAK, SPHN, LD, and IT.

This sequence belongs to the zinc-containing alcohol dehydrogenase family. Monomer.

It functions in the pathway secondary metabolite biosynthesis. In terms of biological role, trans-enoyl reductase; part of the gene cluster that mediates the biosynthesis of oxopyrrolidines, polyketide-amino acid hybrid compounds with feature structures of tetramic acid. The polyketide chain is first assembled by the highly reducing PKS module of opdA using acetyl-CoA as the starter unit and five malonyl-CoA as the extender units. OpdC acts as a trans-acting enoyl reductase and reduces the terminal alkenyl to alkane. The 17R in oxopyrrolidine A and 15R, 17S in oxopyrrolidine B are generated by non-stereospecific catalysis of the ketoreductase (KR) domain and enoyl reductases. Then the polyketides with specific configurations are transferred to the NRPS module of opdA and linked to L-tyrosine to form an amide bond. Finally, the oxopyrrolidines are offloaded through a Dieckmann cyclization catalyzed by the terminal D domain to give a tetramic acid moiety. In Penicillium oxalicum (strain 114-2 / CGMCC 5302) (Penicillium decumbens), this protein is Trans-enoyl reductase opdC.